A 247-amino-acid polypeptide reads, in one-letter code: Protein eak-4 (247 aa).

The N-myristoyl glycine moiety is linked to residue glycine 2.

In terms of tissue distribution, expressed in the 2 embryonic head hypodermal cells XXXL/R.

The protein resides in the cell membrane. Functionally, together with eak-6 and sdf-9, negatively regulates dauer larva formation downstream of the insulin-like receptor daf-2 and in parallel with age-1, pdk-1 and akt-1. The protein is Protein eak-4 of Caenorhabditis elegans.